The sequence spans 512 residues: Cytochrome P450 1A2 (512 aa).

Ser65 carries O-linked (GlcNAc) serine glycosylation. Phe222 is a substrate binding site. Cys454 is a heme binding site.

The protein belongs to the cytochrome P450 family. In terms of assembly, interacts with PGRMC1; the interaction requires PGRMC1 homodimerization. Requires heme as cofactor.

It is found in the endoplasmic reticulum membrane. It localises to the microsome membrane. It catalyses the reaction an organic molecule + reduced [NADPH--hemoprotein reductase] + O2 = an alcohol + oxidized [NADPH--hemoprotein reductase] + H2O + H(+). The enzyme catalyses 17beta-estradiol + reduced [NADPH--hemoprotein reductase] + O2 = 2-hydroxy-17beta-estradiol + oxidized [NADPH--hemoprotein reductase] + H2O + H(+). It carries out the reaction 17beta-estradiol + reduced [NADPH--hemoprotein reductase] + O2 = 4-hydroxy-17beta-estradiol + oxidized [NADPH--hemoprotein reductase] + H2O + H(+). The catalysed reaction is estrone + reduced [NADPH--hemoprotein reductase] + O2 = 2-hydroxyestrone + oxidized [NADPH--hemoprotein reductase] + H2O + H(+). It catalyses the reaction estrone + reduced [NADPH--hemoprotein reductase] + O2 = 4-hydroxyestrone + oxidized [NADPH--hemoprotein reductase] + H2O + H(+). The enzyme catalyses cholesterol + reduced [NADPH--hemoprotein reductase] + O2 = 25-hydroxycholesterol + oxidized [NADPH--hemoprotein reductase] + H2O + H(+). It carries out the reaction all-trans-retinol + reduced [NADPH--hemoprotein reductase] + O2 = all-trans-retinal + oxidized [NADPH--hemoprotein reductase] + 2 H2O + H(+). The catalysed reaction is all-trans-retinal + reduced [NADPH--hemoprotein reductase] + O2 = all-trans-retinoate + oxidized [NADPH--hemoprotein reductase] + H2O + 2 H(+). It catalyses the reaction (5Z,8Z,11Z,14Z)-eicosatetraenoate + reduced [NADPH--hemoprotein reductase] + O2 = (14R,15S)-epoxy-(5Z,8Z,11Z)-eicosatrienoate + oxidized [NADPH--hemoprotein reductase] + H2O + H(+). The enzyme catalyses (5Z,8Z,11Z,14Z)-eicosatetraenoate + reduced [NADPH--hemoprotein reductase] + O2 = (14S,15R)-epoxy-(5Z,8Z,11Z)-eicosatrienoate + oxidized [NADPH--hemoprotein reductase] + H2O + H(+). It carries out the reaction (5Z,8Z,11Z,14Z,17Z)-eicosapentaenoate + reduced [NADPH--hemoprotein reductase] + O2 = (17R,18S)-epoxy-(5Z,8Z,11Z,14Z)-eicosatetraenoate + oxidized [NADPH--hemoprotein reductase] + H2O + H(+). The catalysed reaction is (4Z,7Z,10Z,13Z,16Z,19Z)-docosahexaenoate + reduced [NADPH--hemoprotein reductase] + O2 = (19R,20S)-epoxy-(4Z,7Z,10Z,13Z,16Z)-docosapentaenoate + oxidized [NADPH--hemoprotein reductase] + H2O + H(+). It catalyses the reaction (5S)-hydroperoxy-(6E,8Z,11Z,14Z)-eicosatetraenoate = 5-oxo-(6E,8Z,11Z,14Z)-eicosatetraenoate + H2O. The enzyme catalyses (12S)-hydroperoxy-(5Z,8Z,10E,14Z)-eicosatetraenoate = 12-oxo-(5Z,8Z,10E,14Z)-eicosatetraenoate + H2O. It carries out the reaction (15S)-hydroperoxy-(5Z,8Z,11Z,13E)-eicosatetraenoate = 15-oxo-(5Z,8Z,11Z,13E)-eicosatetraenoate + H2O. The catalysed reaction is (13S)-hydroperoxy-(9Z,11E)-octadecadienoate = 13-oxo-(9Z,11E)-octadecadienoate + H2O. It catalyses the reaction (5Z,8Z,11Z,14Z)-eicosatetraenoate + reduced [NADPH--hemoprotein reductase] + O2 = 13-hydroxy-(5Z,8Z,11Z,14Z)-eicosatetraenoate + oxidized [NADPH--hemoprotein reductase] + H2O + H(+). The enzyme catalyses (5Z,8Z,11Z,14Z)-eicosatetraenoate + reduced [NADPH--hemoprotein reductase] + O2 = 19-hydroxy-(5Z,8Z,11Z,14Z)-eicosatetraenoate + oxidized [NADPH--hemoprotein reductase] + H2O + H(+). It carries out the reaction (9Z,12Z)-octadecadienoate + reduced [NADPH--hemoprotein reductase] + O2 = 11-hydroxy-(9Z,12Z)-octadecadienoate + oxidized [NADPH--hemoprotein reductase] + H2O + H(+). The protein operates within cofactor metabolism; retinol metabolism. Its pathway is steroid metabolism; cholesterol metabolism. It functions in the pathway lipid metabolism; arachidonate metabolism. Functionally, a cytochrome P450 monooxygenase involved in the metabolism of various endogenous substrates, including fatty acids, steroid hormones and vitamins. Mechanistically, uses molecular oxygen inserting one oxygen atom into a substrate, and reducing the second into a water molecule, with two electrons provided by NADPH via cytochrome P450 reductase (NADPH--hemoprotein reductase). Catalyzes the hydroxylation of carbon-hydrogen bonds. Exhibits high catalytic activity for the formation of hydroxyestrogens from estrone (E1) and 17beta-estradiol (E2), namely 2-hydroxy E1 and E2. Metabolizes cholesterol toward 25-hydroxycholesterol, a physiological regulator of cellular cholesterol homeostasis. May act as a major enzyme for all-trans retinoic acid biosynthesis in the liver. Catalyzes two successive oxidative transformation of all-trans retinol to all-trans retinal and then to the active form all-trans retinoic acid. Primarily catalyzes stereoselective epoxidation of the last double bond of polyunsaturated fatty acids (PUFA), displaying a strong preference for the (R,S) stereoisomer. Catalyzes bisallylic hydroxylation and omega-1 hydroxylation of PUFA. May also participate in eicosanoids metabolism by converting hydroperoxide species into oxo metabolites (lipoxygenase-like reaction, NADPH-independent). Plays a role in the oxidative metabolism of xenobiotics. Catalyzes the N-hydroxylation of heterocyclic amines and the O-deethylation of phenacetin. Metabolizes caffeine via N3-demethylation. The polypeptide is Cytochrome P450 1A2 (CYP1A2) (Felis catus (Cat)).